Here is a 256-residue protein sequence, read N- to C-terminus: Geranylgeranylglyceryl phosphate synthase (256 aa).

Mg(2+)-binding residues include aspartate 28 and serine 53. Sn-glycerol 1-phosphate-binding positions include tyrosine 172–glycine 178, glycine 203–glycine 204, and glycine 225–threonine 226.

Belongs to the GGGP/HepGP synthase family. Group II subfamily. Mg(2+) serves as cofactor.

It localises to the cytoplasm. It carries out the reaction sn-glycerol 1-phosphate + (2E,6E,10E)-geranylgeranyl diphosphate = sn-3-O-(geranylgeranyl)glycerol 1-phosphate + diphosphate. The protein operates within membrane lipid metabolism; glycerophospholipid metabolism. Prenyltransferase that catalyzes the transfer of the geranylgeranyl moiety of geranylgeranyl diphosphate (GGPP) to the C3 hydroxyl of sn-glycerol-1-phosphate (G1P). This reaction is the first ether-bond-formation step in the biosynthesis of archaeal membrane lipids. The protein is Geranylgeranylglyceryl phosphate synthase of Methanococcus maripaludis (strain DSM 14266 / JCM 13030 / NBRC 101832 / S2 / LL).